A 232-amino-acid polypeptide reads, in one-letter code: tRNA (guanine-N(1)-)-methyltransferase (232 aa).

S-adenosyl-L-methionine-binding positions include G111 and 131 to 136 (IGDYIL).

It belongs to the RNA methyltransferase TrmD family. In terms of assembly, homodimer.

It localises to the cytoplasm. The catalysed reaction is guanosine(37) in tRNA + S-adenosyl-L-methionine = N(1)-methylguanosine(37) in tRNA + S-adenosyl-L-homocysteine + H(+). Specifically methylates guanosine-37 in various tRNAs. In Bartonella bacilliformis (strain ATCC 35685 / KC583 / Herrer 020/F12,63), this protein is tRNA (guanine-N(1)-)-methyltransferase.